The following is a 53-amino-acid chain: U13-myrmicitoxin-Tb1a (53 aa).

The first 23 residues, 1-23 (MKLIYIFSLVAVIAVTMIPGIMG), serve as a signal peptide directing secretion. Positions 24-29 (EAEAEG) are excised as a propeptide. K52 carries the post-translational modification Lysine amide.

Expressed by the venom gland.

It is found in the secreted. Functionally, in vivo, this neurotoxin paralyzes about 70% of blowflies (L.caesar) one hour after intrathoracic injection, when tested at high doses (45 nmol/g). The sequence is that of U13-myrmicitoxin-Tb1a from Tetramorium bicarinatum (Tramp ant).